The primary structure comprises 463 residues: NADH dehydrogenase [ubiquinone] iron-sulfur protein 2, mitochondrial (463 aa).

The N-terminal 33 residues, 1–33, are a transit peptide targeting the mitochondrion; that stretch reads MAALRALCGFRGVAAQVLRPGAGVRLPIQPSRG. At K62 the chain carries N6-acetyllysine. R118 is modified (symmetric dimethylarginine). Residues C326, C332, and C347 each contribute to the [4Fe-4S] cluster site.

It belongs to the complex I 49 kDa subunit family. Core subunit of respiratory chain NADH dehydrogenase (Complex I) which is composed of 45 different subunits. Component of the iron-sulfur (IP) fragment of the enzyme. Interacts with NDUFAF3. Interacts with NDUFAF7. Interacts with CERS2. [4Fe-4S] cluster is required as a cofactor. In terms of processing, dimethylation at Arg-118 by NDUFAF7 takes place after NDUFS2 assembles into the complex I, leading to stabilize the early intermediate complex.

The protein resides in the mitochondrion inner membrane. The catalysed reaction is a ubiquinone + NADH + 5 H(+)(in) = a ubiquinol + NAD(+) + 4 H(+)(out). In terms of biological role, core subunit of the mitochondrial membrane respiratory chain NADH dehydrogenase (Complex I) which catalyzes electron transfer from NADH through the respiratory chain, using ubiquinone as an electron acceptor. Essential for the catalytic activity and assembly of complex I. Redox-sensitive, critical component of the oxygen-sensing pathway in the pulmonary vasculature which plays a key role in acute pulmonary oxygen-sensing and hypoxic pulmonary vasoconstriction. Plays an important role in carotid body sensing of hypoxia. Essential for glia-like neural stem and progenitor cell proliferation, differentiation and subsequent oligodendrocyte or neuronal maturation. This Pan troglodytes (Chimpanzee) protein is NADH dehydrogenase [ubiquinone] iron-sulfur protein 2, mitochondrial (NDUFS2).